The primary structure comprises 339 residues: Pre-mRNA-splicing factor syf2 (339 aa).

A disordered region spans residues 1–136 (MPPEKKRKTE…LQSDPSQLTA (136 aa)). Over residues 7–16 (RKTEPEDKAE) the composition is skewed to basic and acidic residues. Over residues 17–37 (VTQQENDVAESTTEPNNQTVT) the composition is skewed to polar residues. Residues 45–93 (VTEAALATTSSSSPPVLSASETAQPDTAATSQSSSTPPTSTSAAESAAA) are compositionally biased toward low complexity. Basic and acidic residues predominate over residues 94-103 (KARERAERFR). Residues 126-135 (RLQSDPSQLT) show a composition bias toward polar residues.

Belongs to the SYF2 family. As to quaternary structure, associated with the spliceosome.

It localises to the nucleus. Involved in pre-mRNA splicing. The chain is Pre-mRNA-splicing factor syf2 (msp-4) from Neurospora crassa (strain ATCC 24698 / 74-OR23-1A / CBS 708.71 / DSM 1257 / FGSC 987).